The sequence spans 123 residues: Small ribosomal subunit protein uS12 (123 aa).

Positions 1–29 are disordered; that stretch reads MPTINQLVRKGRVPQKAKSKVPAMEQNPQ. Basic residues predominate over residues 9–19; that stretch reads RKGRVPQKAKS. Position 89 is a 3-methylthioaspartic acid (Asp89).

The protein belongs to the universal ribosomal protein uS12 family. As to quaternary structure, part of the 30S ribosomal subunit. Contacts proteins S8 and S17. May interact with IF1 in the 30S initiation complex.

Functionally, with S4 and S5 plays an important role in translational accuracy. Interacts with and stabilizes bases of the 16S rRNA that are involved in tRNA selection in the A site and with the mRNA backbone. Located at the interface of the 30S and 50S subunits, it traverses the body of the 30S subunit contacting proteins on the other side and probably holding the rRNA structure together. The combined cluster of proteins S8, S12 and S17 appears to hold together the shoulder and platform of the 30S subunit. This is Small ribosomal subunit protein uS12 from Erythrobacter litoralis (strain HTCC2594).